A 708-amino-acid chain; its full sequence is Elongation factor G (708 aa).

One can recognise a tr-type G domain in the interval lysine 8–methionine 290. GTP-binding positions include alanine 17–threonine 24, aspartate 88–histidine 92, and asparagine 142–aspartate 145.

Belongs to the TRAFAC class translation factor GTPase superfamily. Classic translation factor GTPase family. EF-G/EF-2 subfamily.

The protein localises to the cytoplasm. Its function is as follows. Catalyzes the GTP-dependent ribosomal translocation step during translation elongation. During this step, the ribosome changes from the pre-translocational (PRE) to the post-translocational (POST) state as the newly formed A-site-bound peptidyl-tRNA and P-site-bound deacylated tRNA move to the P and E sites, respectively. Catalyzes the coordinated movement of the two tRNA molecules, the mRNA and conformational changes in the ribosome. The polypeptide is Elongation factor G (Psychrobacter cryohalolentis (strain ATCC BAA-1226 / DSM 17306 / VKM B-2378 / K5)).